Here is a 175-residue protein sequence, read N- to C-terminus: Alkyl hydroperoxide reductase AhpD (175 aa).

Residue Cys-130 is the Proton donor of the active site. A disulfide bond links Cys-130 and Cys-133. The active-site Cysteine sulfenic acid (-SOH) intermediate is Cys-133.

It belongs to the AhpD family. As to quaternary structure, homotrimer.

The enzyme catalyses N(6)-[(R)-dihydrolipoyl]-L-lysyl-[lipoyl-carrier protein] + a hydroperoxide = N(6)-[(R)-lipoyl]-L-lysyl-[lipoyl-carrier protein] + an alcohol + H2O. In terms of biological role, antioxidant protein with alkyl hydroperoxidase activity. Required for the reduction of the AhpC active site cysteine residues and for the regeneration of the AhpC enzyme activity. The polypeptide is Alkyl hydroperoxide reductase AhpD (Mycobacteroides abscessus (strain ATCC 19977 / DSM 44196 / CCUG 20993 / CIP 104536 / JCM 13569 / NCTC 13031 / TMC 1543 / L948) (Mycobacterium abscessus)).